Consider the following 176-residue polypeptide: Probable DNA-directed RNA polymerase subunit delta (176 aa).

The region spanning 14–81 (LSLIDVAHFI…GNNMWGLRAW (68 aa)) is the HTH HARE-type domain. Disordered regions lie at residues 91-119 (VQTQ…VDYD) and 140-176 (DEDE…PEDK). Acidic residues-rich tracts occupy residues 105–119 (DDDD…VDYD) and 159–176 (TVED…PEDK).

This sequence belongs to the RpoE family. As to quaternary structure, RNAP is composed of a core of 2 alpha, a beta and a beta' subunits. The core is associated with a delta subunit and one of several sigma factors.

Functionally, participates in both the initiation and recycling phases of transcription. In the presence of the delta subunit, RNAP displays an increased specificity of transcription, a decreased affinity for nucleic acids, and an increased efficiency of RNA synthesis because of enhanced recycling. This Listeria welshimeri serovar 6b (strain ATCC 35897 / DSM 20650 / CCUG 15529 / CIP 8149 / NCTC 11857 / SLCC 5334 / V8) protein is Probable DNA-directed RNA polymerase subunit delta.